Here is a 382-residue protein sequence, read N- to C-terminus: ORC1-type DNA replication protein 1 (382 aa).

Residues threonine 63–alanine 67, tyrosine 205, and arginine 217 contribute to the ATP site.

The protein belongs to the CDC6/cdc18 family. In terms of assembly, monomer. Interacts with MCM via the WH domain. In terms of processing, autophosphorylated on a serine. Phosphorylation is stimulated by binding to MCM. Both single-stranded DNA and double-stranded DNA inhibit the phosphorylation reaction.

Its function is as follows. Involved in regulation of DNA replication. May play an essential role in origin recognition. Binds to DNA, with a preference for origin-specific double-stranded sequences. Does not bind single-stranded DNA. Inhibits MCM helicase activity but does not affect its oligomeric state. This chain is ORC1-type DNA replication protein 1 (cdc6-1), found in Methanothermobacter thermautotrophicus (strain ATCC 29096 / DSM 1053 / JCM 10044 / NBRC 100330 / Delta H) (Methanobacterium thermoautotrophicum).